The chain runs to 406 residues: 2,3-bisphosphoglycerate-independent phosphoglycerate mutase (406 aa).

The protein belongs to the BPG-independent phosphoglycerate mutase family. A-PGAM subfamily.

It carries out the reaction (2R)-2-phosphoglycerate = (2R)-3-phosphoglycerate. It functions in the pathway carbohydrate degradation; glycolysis; pyruvate from D-glyceraldehyde 3-phosphate: step 3/5. Catalyzes the interconversion of 2-phosphoglycerate and 3-phosphoglycerate. In Methanococcus maripaludis (strain C7 / ATCC BAA-1331), this protein is 2,3-bisphosphoglycerate-independent phosphoglycerate mutase.